Here is a 382-residue protein sequence, read N- to C-terminus: Galactokinase (382 aa).

34 to 37 is a binding site for substrate; the sequence is EHTD. Residue 124-130 participates in ATP binding; sequence GAGLSSS. Ser-130 and Glu-162 together coordinate Mg(2+). The active-site Proton acceptor is the Asp-174. Residue Tyr-223 coordinates substrate.

Belongs to the GHMP kinase family. GalK subfamily.

Its subcellular location is the cytoplasm. It carries out the reaction alpha-D-galactose + ATP = alpha-D-galactose 1-phosphate + ADP + H(+). The protein operates within carbohydrate metabolism; galactose metabolism. Catalyzes the transfer of the gamma-phosphate of ATP to D-galactose to form alpha-D-galactose-1-phosphate (Gal-1-P). In Salmonella paratyphi C (strain RKS4594), this protein is Galactokinase.